A 234-amino-acid polypeptide reads, in one-letter code: Sugar fermentation stimulation protein A (234 aa).

Positions 201-220 (LLSEAQQRGVEILAYKAEIS) form a DNA-binding region, H-T-H motif.

It belongs to the SfsA family.

Binds to DNA non-specifically. Could be a regulatory factor involved in maltose metabolism. The protein is Sugar fermentation stimulation protein A of Shigella sonnei (strain Ss046).